Consider the following 382-residue polypeptide: MKALSILGSTGSIGLSTLDVVRQHPGKFTITGLAEGHDVGLLNEQINEFRPDVVSVRDAASADQLRKLLGTHKPEIFYGIEGAATVAAAEGAEMVVSAIVGAAGLVPTVSAIKAGKHIALANKETLVVAGQLVSDLVKKHNVQLLPVDSEHSAIFQSLAGHRTEDIERIILTASGGPFRKTPAEELKLAGPEQALKHPQWTMGAKITIDSATLMNKGLEVIEAHWLFNMPAEKIGVVVHPQSIIHSMVEYIDGCVMAQMGVPDMRAPIAYALAWPERCGTGIGKLDLAKIGTLTFEEPDMERFPALRLAFDALKAGRTYPAVLNAANEIAVAAFLDKKIGFTDIADTVDKTMQAHEAYAPVELDEYLQADRWAREKAREIIG.

Residues Thr-10, Gly-11, Ser-12, Ile-13, Gly-36, and Asn-122 each contribute to the NADPH site. Lys-123 provides a ligand contact to 1-deoxy-D-xylulose 5-phosphate. Glu-124 lines the NADPH pocket. Position 148 (Asp-148) interacts with Mn(2+). 1-deoxy-D-xylulose 5-phosphate contacts are provided by Ser-149, Glu-150, Ser-174, and His-197. Position 150 (Glu-150) interacts with Mn(2+). Residue Gly-203 participates in NADPH binding. Ser-210, Asn-215, Lys-216, and Glu-219 together coordinate 1-deoxy-D-xylulose 5-phosphate. Mn(2+) is bound at residue Glu-219.

Belongs to the DXR family. Requires Mg(2+) as cofactor. Mn(2+) is required as a cofactor.

It catalyses the reaction 2-C-methyl-D-erythritol 4-phosphate + NADP(+) = 1-deoxy-D-xylulose 5-phosphate + NADPH + H(+). It functions in the pathway isoprenoid biosynthesis; isopentenyl diphosphate biosynthesis via DXP pathway; isopentenyl diphosphate from 1-deoxy-D-xylulose 5-phosphate: step 1/6. Catalyzes the NADPH-dependent rearrangement and reduction of 1-deoxy-D-xylulose-5-phosphate (DXP) to 2-C-methyl-D-erythritol 4-phosphate (MEP). The polypeptide is 1-deoxy-D-xylulose 5-phosphate reductoisomerase (Chlorobium limicola (strain DSM 245 / NBRC 103803 / 6330)).